A 1102-amino-acid chain; its full sequence is Protein MMS22-like (1102 aa).

It belongs to the MMS22 family. MMS22L subfamily.

Its subcellular location is the nucleus. The protein localises to the chromosome. Functionally, involved in recombination-dependent repair of stalled or collapsed replication forks. In Drosophila melanogaster (Fruit fly), this protein is Protein MMS22-like.